An 81-amino-acid polypeptide reads, in one-letter code: Cytochrome c oxidase subunit 7B2, mitochondrial (81 aa).

Residues 1 to 25 (MMFPLARNALSSLKIQSILQSMARH) constitute a mitochondrion transit peptide. Residues 26-33 (SHVKHSPD) lie on the Mitochondrial matrix side of the membrane. Residues 34-60 (FHDKYGNAVLASGTAFCVATWVFTATQ) form a helical membrane-spanning segment. Over 61-81 (IGIEWNLSPVGRVTPKEWKHQ) the chain is Mitochondrial intermembrane.

The protein belongs to the cytochrome c oxidase VIIb family. Component of the cytochrome c oxidase (complex IV, CIV), a multisubunit enzyme composed of 14 subunits. The complex is composed of a catalytic core of 3 subunits MT-CO1, MT-CO2 and MT-CO3, encoded in the mitochondrial DNA, and 11 supernumerary subunits COX4I, COX5A, COX5B, COX6A, COX6B, COX6C, COX7A, COX7B, COX7C, COX8 and NDUFA4, which are encoded in the nuclear genome. The complex exists as a monomer or a dimer and forms supercomplexes (SCs) in the inner mitochondrial membrane with NADH-ubiquinone oxidoreductase (complex I, CI) and ubiquinol-cytochrome c oxidoreductase (cytochrome b-c1 complex, complex III, CIII), resulting in different assemblies (supercomplex SCI(1)III(2)IV(1) and megacomplex MCI(2)III(2)IV(2)).

The protein localises to the mitochondrion inner membrane. Its pathway is energy metabolism; oxidative phosphorylation. Component of the cytochrome c oxidase, the last enzyme in the mitochondrial electron transport chain which drives oxidative phosphorylation. The respiratory chain contains 3 multisubunit complexes succinate dehydrogenase (complex II, CII), ubiquinol-cytochrome c oxidoreductase (cytochrome b-c1 complex, complex III, CIII) and cytochrome c oxidase (complex IV, CIV), that cooperate to transfer electrons derived from NADH and succinate to molecular oxygen, creating an electrochemical gradient over the inner membrane that drives transmembrane transport and the ATP synthase. Cytochrome c oxidase is the component of the respiratory chain that catalyzes the reduction of oxygen to water. Electrons originating from reduced cytochrome c in the intermembrane space (IMS) are transferred via the dinuclear copper A center (CU(A)) of subunit 2 and heme A of subunit 1 to the active site in subunit 1, a binuclear center (BNC) formed by heme A3 and copper B (CU(B)). The BNC reduces molecular oxygen to 2 water molecules using 4 electrons from cytochrome c in the IMS and 4 protons from the mitochondrial matrix. The sequence is that of Cytochrome c oxidase subunit 7B2, mitochondrial (COX7B2) from Homo sapiens (Human).